Reading from the N-terminus, the 231-residue chain is Uracil-DNA glycosylase (231 aa).

Catalysis depends on Asp-74, which acts as the Proton acceptor.

Belongs to the uracil-DNA glycosylase (UDG) superfamily. UNG family.

It localises to the cytoplasm. It carries out the reaction Hydrolyzes single-stranded DNA or mismatched double-stranded DNA and polynucleotides, releasing free uracil.. In terms of biological role, excises uracil residues from the DNA which can arise as a result of misincorporation of dUMP residues by DNA polymerase or due to deamination of cytosine. The sequence is that of Uracil-DNA glycosylase from Campylobacter jejuni subsp. doylei (strain ATCC BAA-1458 / RM4099 / 269.97).